The following is an 82-amino-acid chain: Cytochrome b-c1 complex subunit 8 (82 aa).

Over 2-39 (GRQFGHLTRVRHVITYSLSPFEQRAFPHYFSKGIPNVL) the chain is Mitochondrial matrix. Position 33 is an N6-acetyllysine; alternate (Lys-33). Residue Lys-33 is modified to N6-succinyllysine; alternate. The chain crosses the membrane as a helical span at residues 40-68 (RRTRACILRVAPPFVAFYLVYTWGTQEFE). Residues 69–82 (KSKRKNPAAYENDR) lie on the Mitochondrial intermembrane side of the membrane.

Belongs to the UQCRQ/QCR8 family. In terms of assembly, component of the ubiquinol-cytochrome c oxidoreductase (cytochrome b-c1 complex, complex III, CIII), a multisubunit enzyme composed of 11 subunits. The complex is composed of 3 respiratory subunits cytochrome b, cytochrome c1 and Rieske protein UQCRFS1, 2 core protein subunits UQCRC1/QCR1 and UQCRC2/QCR2, and 6 low-molecular weight protein subunits UQCRH/QCR6, UQCRB/QCR7, UQCRQ/QCR8, UQCR10/QCR9, UQCR11/QCR10 and subunit 9, the cleavage product of Rieske protein UQCRFS1. The complex exists as an obligatory dimer and forms supercomplexes (SCs) in the inner mitochondrial membrane with NADH-ubiquinone oxidoreductase (complex I, CI) and cytochrome c oxidase (complex IV, CIV), resulting in different assemblies (supercomplex SCI(1)III(2)IV(1) and megacomplex MCI(2)III(2)IV(2)). Interacts with UQCC6.

It is found in the mitochondrion inner membrane. Component of the ubiquinol-cytochrome c oxidoreductase, a multisubunit transmembrane complex that is part of the mitochondrial electron transport chain which drives oxidative phosphorylation. The respiratory chain contains 3 multisubunit complexes succinate dehydrogenase (complex II, CII), ubiquinol-cytochrome c oxidoreductase (cytochrome b-c1 complex, complex III, CIII) and cytochrome c oxidase (complex IV, CIV), that cooperate to transfer electrons derived from NADH and succinate to molecular oxygen, creating an electrochemical gradient over the inner membrane that drives transmembrane transport and the ATP synthase. The cytochrome b-c1 complex catalyzes electron transfer from ubiquinol to cytochrome c, linking this redox reaction to translocation of protons across the mitochondrial inner membrane, with protons being carried across the membrane as hydrogens on the quinol. In the process called Q cycle, 2 protons are consumed from the matrix, 4 protons are released into the intermembrane space and 2 electrons are passed to cytochrome c. In Bos taurus (Bovine), this protein is Cytochrome b-c1 complex subunit 8 (UQCRQ).